The sequence spans 120 residues: Aspartate 1-decarboxylase (120 aa).

Ser25 functions as the Schiff-base intermediate with substrate; via pyruvic acid in the catalytic mechanism. Position 25 is a pyruvic acid (Ser) (Ser25). Thr57 contacts substrate. Tyr58 serves as the catalytic Proton donor. Position 73–75 (73–75) interacts with substrate; that stretch reads GAA.

It belongs to the PanD family. Heterooctamer of four alpha and four beta subunits. It depends on pyruvate as a cofactor. Is synthesized initially as an inactive proenzyme, which is activated by self-cleavage at a specific serine bond to produce a beta-subunit with a hydroxyl group at its C-terminus and an alpha-subunit with a pyruvoyl group at its N-terminus.

Its subcellular location is the cytoplasm. The catalysed reaction is L-aspartate + H(+) = beta-alanine + CO2. It functions in the pathway cofactor biosynthesis; (R)-pantothenate biosynthesis; beta-alanine from L-aspartate: step 1/1. In terms of biological role, catalyzes the pyruvoyl-dependent decarboxylation of aspartate to produce beta-alanine. The protein is Aspartate 1-decarboxylase of Deinococcus geothermalis (strain DSM 11300 / CIP 105573 / AG-3a).